The following is a 300-amino-acid chain: MRLFENSKDMENRKRLLRAKKAAGNNNCFECKSVNPQFVSCSFGIFICVNCANLLRGMGTNIFCVKSITMDNFEEKDVRRVEKSGNNRFGSFLSKNGILQNGIPLREKYDNLFAKSYKRRLANEVRSNDINRNMYLGFNNFQQYTNGATSQIRDRTLREISNNSNASEGAEFVLPEKVLGSDNFQDCERFPACLSSERNLDENNVTSATSTLTIEKFQNDPIGTISRSWQLLSDALYKSYEDFKGSVVQPTIENIQQRNLPNDIKRSFVHFNEKLHETPHLPSPVFSCFTGGDILPPEFN.

In terms of domain architecture, Arf-GAP spans glutamate 11 to isoleucine 130. A C4-type zinc finger spans residues cysteine 28–cysteine 51.

The sequence is that of Sporulation protein SPS18 (SPS18) from Saccharomyces cerevisiae (strain ATCC 204508 / S288c) (Baker's yeast).